The chain runs to 309 residues: Homoserine kinase (309 aa).

An ATP-binding site is contributed by 91-101; that stretch reads PIGSGLGSSAC.

It belongs to the GHMP kinase family. Homoserine kinase subfamily.

Its subcellular location is the cytoplasm. It carries out the reaction L-homoserine + ATP = O-phospho-L-homoserine + ADP + H(+). The protein operates within amino-acid biosynthesis; L-threonine biosynthesis; L-threonine from L-aspartate: step 4/5. In terms of biological role, catalyzes the ATP-dependent phosphorylation of L-homoserine to L-homoserine phosphate. This chain is Homoserine kinase, found in Yersinia enterocolitica serotype O:8 / biotype 1B (strain NCTC 13174 / 8081).